A 140-amino-acid polypeptide reads, in one-letter code: Holo-[acyl-carrier-protein] synthase (140 aa).

Aspartate 8 and glutamate 57 together coordinate Mg(2+).

This sequence belongs to the P-Pant transferase superfamily. AcpS family. Mg(2+) is required as a cofactor.

The protein resides in the cytoplasm. It carries out the reaction apo-[ACP] + CoA = holo-[ACP] + adenosine 3',5'-bisphosphate + H(+). Functionally, transfers the 4'-phosphopantetheine moiety from coenzyme A to a Ser of acyl-carrier-protein. This Beijerinckia indica subsp. indica (strain ATCC 9039 / DSM 1715 / NCIMB 8712) protein is Holo-[acyl-carrier-protein] synthase.